Consider the following 291-residue polypeptide: tRNA N(3)-cytidine methyltransferase METTL8, mitochondrial (291 aa).

The transit peptide at 1-21 (MNMIWRNSISCLRLGKVPHRY) directs the protein to the mitochondrion. Residue Lys-80 forms a Glycyl lysine isopeptide (Lys-Gly) (interchain with G-Cter in SUMO) linkage. Residues Trp-89 and Tyr-93 each contribute to the S-adenosyl-L-methionine site. The disordered stretch occupies residues 141-187 (FSRMHCPTVPDEKNHYEKSSGSSEGQSKTESDFSNLDSEKHKKGPME). Low complexity predominate over residues 159–168 (SSGSSEGQSK). Gly-204, Asp-230, and Asp-256 together coordinate S-adenosyl-L-methionine.

It belongs to the methyltransferase superfamily. METL family. In terms of assembly, interacts with EP300.

Its subcellular location is the mitochondrion. It catalyses the reaction cytidine(32) in tRNA(Ser) + S-adenosyl-L-methionine = N(3)-methylcytidine(32) in tRNA(Ser) + S-adenosyl-L-homocysteine + H(+). It carries out the reaction cytidine(32) in tRNA(Thr) + S-adenosyl-L-methionine = N(3)-methylcytidine(32) in tRNA(Thr) + S-adenosyl-L-homocysteine + H(+). The enzyme catalyses a cytidine in mRNA + S-adenosyl-L-methionine = an N(3)-methylcytidine in mRNA + S-adenosyl-L-homocysteine + H(+). Its function is as follows. Mitochondrial S-adenosyl-L-methionine-dependent methyltransferase that mediates N(3)-methylcytidine modification of residue 32 of the tRNA anticodon loop of mitochondrial tRNA(Ser)(UCN) and tRNA(Thr). N(3)-methylcytidine methylation modification regulates mitochondrial translation efficiency and is required for activity of the respiratory chain. N(3)-methylcytidine methylation of mitochondrial tRNA(Ser)(UCN) requires the formation of N(6)-dimethylallyladenosine(37) (i6A37) by TRIT1 as prerequisite. May also mediate N(3)-methylcytidine modification of mRNAs. The existence of N(3)-methylcytidine modification on mRNAs is however unclear, and additional evidences are required to confirm the role of the N(3)-methylcytidine-specific mRNA methyltransferase activity of METTL8 in vivo. In Homo sapiens (Human), this protein is tRNA N(3)-cytidine methyltransferase METTL8, mitochondrial.